Reading from the N-terminus, the 717-residue chain is Probable E3 ubiquitin-protein ligase WAVH2 (717 aa).

Polar residues-rich tracts occupy residues 13–28 (VSSN…SLHT) and 85–94 (RTTSNATPRT). Residues 13 to 120 (VSSNQDKPQQ…SSSSSSSQGG (108 aa)) form a disordered region. The segment covering 95-117 (SNSSSPKFFSNPSSPKSSSSSSS) has biased composition (low complexity). The RING-type; atypical zinc finger occupies 140-184 (CAICLQRVNSNQSNSTAAIFTAECSHSFHLSCVNGLEDKRCPFCS). The 131-residue stretch at 326-456 (DLVTVLDLSN…LNATRIPFVV (131 aa)) folds into the VWFA domain.

Expressed in root tips, cotyledons, leaf primordia and hypocotyls.

The enzyme catalyses S-ubiquitinyl-[E2 ubiquitin-conjugating enzyme]-L-cysteine + [acceptor protein]-L-lysine = [E2 ubiquitin-conjugating enzyme]-L-cysteine + N(6)-ubiquitinyl-[acceptor protein]-L-lysine.. Its function is as follows. Probable E3 ubiquitin-protein ligase involved in the regulation of root growth. Acts as a positive regulator of root gravitropism. The polypeptide is Probable E3 ubiquitin-protein ligase WAVH2 (Arabidopsis thaliana (Mouse-ear cress)).